The chain runs to 644 residues: Exoribonuclease 2 (644 aa).

An RNB domain is found at 189–516 (REDLTALDFV…NHRLLKAVIK (328 aa)). An S1 motif domain is found at 561–643 (GTRFAAEIVD…ETRGIIARPV (83 aa)).

It belongs to the RNR ribonuclease family. RNase II subfamily.

It is found in the cytoplasm. The catalysed reaction is Exonucleolytic cleavage in the 3'- to 5'-direction to yield nucleoside 5'-phosphates.. In terms of biological role, involved in mRNA degradation. Hydrolyzes single-stranded polyribonucleotides processively in the 3' to 5' direction. The protein is Exoribonuclease 2 of Shigella sonnei (strain Ss046).